A 205-amino-acid polypeptide reads, in one-letter code: Large ribosomal subunit protein uL4 (205 aa).

Residues 43-95 are disordered; it reads RSGNRAQKDRAEVKHSTKKPWRQKGTGRARAGMTSSPLWRGGGRAFPNSPEEN. Residues 48–57 are compositionally biased toward basic and acidic residues; that stretch reads AQKDRAEVKH. The segment covering 58–69 has biased composition (basic residues); sequence STKKPWRQKGTG.

Belongs to the universal ribosomal protein uL4 family. In terms of assembly, part of the 50S ribosomal subunit.

Functionally, one of the primary rRNA binding proteins, this protein initially binds near the 5'-end of the 23S rRNA. It is important during the early stages of 50S assembly. It makes multiple contacts with different domains of the 23S rRNA in the assembled 50S subunit and ribosome. In terms of biological role, forms part of the polypeptide exit tunnel. The chain is Large ribosomal subunit protein uL4 from Bordetella pertussis (strain Tohama I / ATCC BAA-589 / NCTC 13251).